The sequence spans 337 residues: MASAFSAFRVSLSRISPFRDTRFSYPATLALAHTKRIMCNSSHSVSPSPSPSDFSSSSSSSSSSPSTFSLMETSENARWRPMCLYYTHGKCTKMDDPAHLEIFNHDCSKELRVAAADLERKKSQEFNFFLVIDLEGKVEILEFPILIVDAKTMEVVDLFHRFVRPTKMSEQAINKYIEGKYGELGVDRVWHDTAIPFKQVVEEFEVWLAEHDLWDKDTDWGLNDAAFVTCGNWDIKTKIPEQCVVSNINLPPYFMEWINLKDVYLNFYGREARGMVSMMRQCGIKLMGSHHLGIDDTKNITRVVQRMLSEGAVLKLTARRSKSNMRNVEFLFKNRIK.

A compositionally biased stretch (low complexity) spans 42 to 66; sequence SHSVSPSPSPSDFSSSSSSSSSSPS. The segment at 42 to 68 is disordered; the sequence is SHSVSPSPSPSDFSSSSSSSSSSPSTF. Residues 129 to 304 form the Exonuclease domain; the sequence is FLVIDLEGKV…DDTKNITRVV (176 aa). Positions 133, 135, and 234 each coordinate Mg(2+). Glutamate 135 functions as the Proton acceptor in the catalytic mechanism. An AMP-binding site is contributed by glutamate 135. The active-site Proton acceptor is the histidine 291. Histidine 291 provides a ligand contact to AMP. Mg(2+) is bound at residue aspartate 296.

This is an uncharacterized protein from Arabidopsis thaliana (Mouse-ear cress).